The chain runs to 392 residues: Galactokinase (392 aa).

The alpha-D-galactose site is built by Arg37, Glu43, His44, and Asp46. Gly136, Gly138, Ser140, and Ser141 together coordinate ATP. Alpha-D-galactose is bound at residue Asp186. Asp186 serves as the catalytic Proton acceptor. Phosphoserine is present on Ser230. Alpha-D-galactose is bound at residue Tyr236.

The protein belongs to the GHMP kinase family. GalK subfamily. As to quaternary structure, homodimer.

It catalyses the reaction alpha-D-galactose + ATP = alpha-D-galactose 1-phosphate + ADP + H(+). The protein operates within carbohydrate metabolism; galactose metabolism. Catalyzes the transfer of a phosphate from ATP to alpha-D-galactose and participates in the first committed step in the catabolism of galactose. This is Galactokinase from Homo sapiens (Human).